The sequence spans 593 residues: MLPAHKQTLEALLADSVTQVAHALKGADAAFVAPAITLERPKVAAHGDVACNVAMQLAKPLGTNPRQLAEKIVAALTAQPAAQGLVDAADIAGPGFINLRLTAAAKQAVIAAVFEQGRAFGTSDREKGKQVLLEFVSANPTGPLHVGHGRQAALGDVLANVIASQGYAVHREFYYNDAGVQIGNLAISTQARARGLKPGDAGWPEAAYNGEYIADIARDYLNRETVAAKDGEPVTGAGDIDDLDAIRKFAVAYLRHEQDMDLQAFGVKFDQYYLESSLYSEGRVEKTVDALVKAGMTYEQDGALWLRTTDEGDDKDRVMRKSDGTYTYFVPDVAYHVTKWERGFTQVINIQGSDHHGTIARVRAGLQGLHVGIPKGYPDYVLHKMVTVMRDGQEVKLSKRAGSYVTVRDLIEWSGGAAPGQEAAPDLIDEATITRGRDAVRFFLISRKADTEFVFDIDLALKQNDENPVYYVQYAHARICSVLNELKSRYNVDVAQLPGADLSQLTSAQAVSLMQKLAEYPDMLTHAAKELAPHAVAFYLRDLAGEFHSFYNAERVLVDDEAPRNARAALLAATRQVLENGLAVLGVSAPAKM.

The 'HIGH' region signature appears at 138–148; that stretch reads ANPTGPLHVGH.

Belongs to the class-I aminoacyl-tRNA synthetase family. Monomer.

It is found in the cytoplasm. It catalyses the reaction tRNA(Arg) + L-arginine + ATP = L-arginyl-tRNA(Arg) + AMP + diphosphate. In Burkholderia ambifaria (strain ATCC BAA-244 / DSM 16087 / CCUG 44356 / LMG 19182 / AMMD) (Burkholderia cepacia (strain AMMD)), this protein is Arginine--tRNA ligase.